We begin with the raw amino-acid sequence, 290 residues long: Putative OX-2 membrane glycoprotein homolog (290 aa).

A signal peptide spans 1–17 (MSSLMLRLLPLLYIISA). Residues 18–267 (HFVLHPETSP…SDETVFTWTV (250 aa)) are Extracellular-facing. The Ig-like V-type domain occupies 23 to 135 (PETSPSLIYE…TFTVDNEKTS (113 aa)). Residues Cys41 and Cys125 are joined by a disulfide bond. N-linked (GlcNAc...) asparagine; by host glycans are attached at residues Asn71, Asn104, Asn194, and Asn202. In terms of domain architecture, Ig-like C2-type spans 146–236 (PIVVLYFRYL…TNQKASALVT (91 aa)). Residues 268-288 (PLILILISVIVLLISVCIVAF) form a helical membrane-spanning segment. At 289 to 290 (KS) the chain is on the cytoplasmic side.

The protein resides in the membrane. This is Putative OX-2 membrane glycoprotein homolog (U85) from Homo sapiens (Human).